The chain runs to 249 residues: Methylthioribulose-1-phosphate dehydratase (249 aa).

Positions 103 and 105 each coordinate Zn(2+).

Belongs to the aldolase class II family. MtnB subfamily. It depends on Zn(2+) as a cofactor.

It carries out the reaction 5-(methylsulfanyl)-D-ribulose 1-phosphate = 5-methylsulfanyl-2,3-dioxopentyl phosphate + H2O. It functions in the pathway amino-acid biosynthesis; L-methionine biosynthesis via salvage pathway; L-methionine from S-methyl-5-thio-alpha-D-ribose 1-phosphate: step 2/6. In terms of biological role, catalyzes the dehydration of methylthioribulose-1-phosphate (MTRu-1-P) into 2,3-diketo-5-methylthiopentyl-1-phosphate (DK-MTP-1-P). The chain is Methylthioribulose-1-phosphate dehydratase from Leptospira interrogans serogroup Icterohaemorrhagiae serovar Lai (strain 56601).